Here is a 156-residue protein sequence, read N- to C-terminus: Small ribosomal subunit protein uS7 (156 aa).

Belongs to the universal ribosomal protein uS7 family. In terms of assembly, part of the 30S ribosomal subunit. Contacts proteins S9 and S11.

Its function is as follows. One of the primary rRNA binding proteins, it binds directly to 16S rRNA where it nucleates assembly of the head domain of the 30S subunit. Is located at the subunit interface close to the decoding center, probably blocks exit of the E-site tRNA. The polypeptide is Small ribosomal subunit protein uS7 (Clostridioides difficile (strain 630) (Peptoclostridium difficile)).